The chain runs to 73 residues: Ubiquitin-like protein 5 (73 aa).

The Ubiquitin-like domain occupies Met-1–Gln-73.

The protein localises to the cytoplasm. The sequence is that of Ubiquitin-like protein 5 (ubl) from Drosophila melanogaster (Fruit fly).